Here is a 530-residue protein sequence, read N- to C-terminus: Meiosis 1 arrest protein (530 aa).

The interval 463–530 (LHPHWESRAP…SEWEKDPSRP (68 aa)) is disordered. A compositionally biased stretch (low complexity) spans 503 to 516 (ASKMPAASKSSSDA).

The protein localises to the cytoplasm. Required for meiosis I progression during spermatogenesis. The sequence is that of Meiosis 1 arrest protein (M1AP) from Homo sapiens (Human).